Here is a 250-residue protein sequence, read N- to C-terminus: Small ribosomal subunit protein uS3 (250 aa).

Positions 39 to 111 constitute a KH type-2 domain; the sequence is IRTLIKNHYP…KIQINIFEVK (73 aa).

Belongs to the universal ribosomal protein uS3 family. Part of the 30S ribosomal subunit. Forms a tight complex with proteins S10 and S14.

In terms of biological role, binds the lower part of the 30S subunit head. Binds mRNA in the 70S ribosome, positioning it for translation. The sequence is that of Small ribosomal subunit protein uS3 from Elm witches'-broom phytoplasma.